We begin with the raw amino-acid sequence, 584 residues long: Endogenous retrovirus group FC1 Env polyprotein (584 aa).

Residues 1–22 (MARPSPLCLLLLLTLLTPIVPS) form the signal peptide. Residues 23-518 (NSLLTEPPFR…GWWQSPLTTW (496 aa)) lie on the Extracellular side of the membrane. N-linked (GlcNAc...) asparagine glycosylation is found at asparagine 69 and asparagine 247. The CXXC motif lies at 251–254 (CFLC). N-linked (GlcNAc...) asparagine glycosylation is found at asparagine 272, asparagine 276, asparagine 308, asparagine 313, asparagine 322, asparagine 334, asparagine 342, and asparagine 346. A fusion peptide region spans residues 384–404 (AVFPPLVIGVSLTSSLVASGL). The CKS-17 signature appears at 449–465 (MQNRRALDLLTADKGGT). A disulfide bridge links cysteine 466 with cysteine 473. The CX6CC motif lies at 466–474 (CMFLGEECC). An N-linked (GlcNAc...) asparagine glycan is attached at asparagine 478. Residues 519 to 539 (IIPFISPILIICLLLLIAPCV) traverse the membrane as a helical segment. Residues 540–584 (LKFIKNRISEVSRVTVNQMLLHPYSRLPTSEDHYDDALTQQEAAR) lie on the Cytoplasmic side of the membrane.

It belongs to the gamma type-C retroviral envelope protein family. HERV class-I F(c)1 env subfamily. The surface (SU) and transmembrane (TM) proteins form a heterodimer. SU and TM are attached by noncovalent interactions or by a labile interchain disulfide bond. Specific enzymatic cleavages in vivo yield the mature SU and TM proteins. Post-translationally, the CXXC motif is highly conserved across a broad range of retroviral envelope proteins. It is thought to participate in the formation of a labile disulfide bond possibly with the CX6CC motif present in the transmembrane protein. Low expression in skin, testis and trachea.

The protein localises to the virion. It is found in the cell membrane. In terms of biological role, retroviral envelope proteins mediate receptor recognition and membrane fusion during early infection. Endogenous envelope proteins may have kept, lost or modified their original function during evolution. This endogenous envelope protein has lost its original fusogenic properties. Its function is as follows. SU mediates receptor recognition. TM anchors the envelope heterodimer to the viral membrane through one transmembrane domain. The other hydrophobic domain, called fusion peptide, mediates fusion of the viral membrane with the target cell membrane. The chain is Endogenous retrovirus group FC1 Env polyprotein (ERVFC1) from Homo sapiens (Human).